The following is a 312-amino-acid chain: Ribosomal RNA small subunit methyltransferase H (312 aa).

S-adenosyl-L-methionine contacts are provided by residues 33–35 (GGH), Asp53, Phe80, Asp101, and Gln108.

Belongs to the methyltransferase superfamily. RsmH family.

The protein resides in the cytoplasm. It carries out the reaction cytidine(1402) in 16S rRNA + S-adenosyl-L-methionine = N(4)-methylcytidine(1402) in 16S rRNA + S-adenosyl-L-homocysteine + H(+). In terms of biological role, specifically methylates the N4 position of cytidine in position 1402 (C1402) of 16S rRNA. This chain is Ribosomal RNA small subunit methyltransferase H, found in Desulfosudis oleivorans (strain DSM 6200 / JCM 39069 / Hxd3) (Desulfococcus oleovorans).